We begin with the raw amino-acid sequence, 109 residues long: Homeobox protein E60 (109 aa).

A disordered region spans residues 1–31 (PRTRRVKRSDGRGNGGTPEEKRPRTAFSGEQ). The segment at residues 20-79 (EKRPRTAFSGEQLARLKREFAENRYLTERRRQQLSRDLGLNEAQIKIWFQNKRAKIKKAS) is a DNA-binding region (homeobox).

The protein belongs to the engrailed homeobox family.

The protein resides in the nucleus. The sequence is that of Homeobox protein E60 from Apis mellifera (Honeybee).